Consider the following 185-residue polypeptide: Neuronal vesicle trafficking-associated protein 1 (185 aa).

Residues 1-82 (MVKLGNNFAE…ITEGVTERFK (82 aa)) lie on the Cytoplasmic side of the membrane. A helical; Signal-anchor for type II membrane protein membrane pass occupies residues 83 to 103 (VSVLVLFALAFLTCVVFLVVY). Over 104–185 (KVYKYDRACP…QETEAAEKSA (82 aa)) the chain is Lumenal. Residues 129–164 (ESYYTEQDSSAREKFYTVINHYNVAKQSITRSVSPW) are required for GRIP1 interaction.

It belongs to the NSG family. Forms a complex with GRIP1, GRIA2 and STX12 through direct interaction with GRIP1; controls the intracellular fate of AMPAR and the endosomal sorting of the GRIA2 subunit toward recycling and membrane targeting. Interacts with STX12. Interacts with APP; could regulate APP processing. Interacts with FAM171A1. As to expression, pituitary and less in adrenal gland and testis. Expressed in the hippocampus throughout development. At P0, highly and broadly expressed throughout the cortical plate, but is down-regulated overall at P8 and P14, but remains relatively enriched in layer V. At P0 is expressed ubiquitously in the developing cerebellum namely Purkinje neurons as well as granule neurons. However, it becomes restricted to Purkinje cells by P8. This exclusive expression in Purkinje cells is maintained throughout adulthood.

The protein localises to the membrane. Its subcellular location is the golgi apparatus. The protein resides in the trans-Golgi network membrane. It localises to the endosome membrane. It is found in the cell projection. The protein localises to the dendrite. Its subcellular location is the early endosome membrane. The protein resides in the late endosome membrane. It localises to the lysosome lumen. It is found in the recycling endosome membrane. The protein localises to the cytoplasmic vesicle membrane. Its subcellular location is the golgi stack membrane. The protein resides in the endosome. It localises to the multivesicular body membrane. It is found in the endoplasmic reticulum membrane. Plays a role in the recycling mechanism in neurons of multiple receptors, including AMPAR, APP and L1CAM and acts at the level of early endosomes to promote sorting of receptors toward a recycling pathway. Regulates sorting and recycling of GRIA2 through interaction with GRIP1 and then contributes to the regulation of synaptic transmission and plasticity by affecting the recycling and targeting of AMPA receptors to the synapse. Is required for faithful sorting of L1CAM to axons by facilitating trafficking from somatodendritic early endosome or the recycling endosome. In an other hand, induces apoptosis via the activation of CASP3 in response to DNA damage. The sequence is that of Neuronal vesicle trafficking-associated protein 1 from Mus musculus (Mouse).